The following is a 2112-amino-acid chain: Phenolphthiocerol synthesis polyketide synthase type I Pks15/1 (2112 aa).

Residues 46-469 (TEPVAVVGIG…GTNAHLILEE (424 aa)) enclose the Ketosynthase family 3 (KS3) domain. Catalysis depends on for beta-ketoacyl synthase activity residues Cys216, His351, and His391. The acyltransferase stretch occupies residues 579 to 893 (TVVVFPGQGA…GQVFTTGVPV (315 aa)). The For acyltransferase activity role is filled by Ser670. Residues 941 to 1063 (HALLGAVVER…GMLGVAAAET (123 aa)) form an N-terminal hotdog fold region. A dehydratase region spans residues 941–1101 (HALLGAVVER…YAYGPAFQGL (161 aa)). A PKS/mFAS DH domain is found at 941-1215 (HALLGAVVER…TRPITAEQLR (275 aa)). Catalysis depends on His973, which acts as the Proton acceptor; for dehydratase activity. Residues 1075–1215 (AESVDISDGY…TRPITAEQLR (141 aa)) are C-terminal hotdog fold. Catalysis depends on Asp1136, which acts as the Proton donor; for dehydratase activity. The segment at 1406–1711 (GTLEDLVIQP…QARHIGKVVL (306 aa)) is enoylreductase. NADP(+)-binding positions include 1536–1553 (VLIH…VQLA) and 1725–1740 (TVVI…GVLA). The segment at 1724–1905 (GTVVITGATG…SLAWGLWEQP (182 aa)) is beta-ketoacyl reductase. The 76-residue stretch at 2010–2085 (ELLVGLVCLQ…AVAEYVAQQM (76 aa)) folds into the Carrier domain. An O-(pantetheine 4'-phosphoryl)serine modification is found at Ser2045. Polar residues predominate over residues 2084–2100 (QMSGSRPTESGDPTSQV). Residues 2084–2112 (QMSGSRPTESGDPTSQVVEPAAAEVSVHA) are disordered.

The protein belongs to the thiolase-like superfamily. Beta-ketoacyl-ACP synthases family. Requires pantetheine 4'-phosphate as cofactor.

It catalyses the reaction a fatty acyl-[ACP] + malonyl-[ACP] + H(+) = a 3-oxoacyl-[ACP] + holo-[ACP] + CO2. It participates in lipid metabolism; fatty acid biosynthesis. Functionally, catalyzes the elongation by iterative transfer of p-hydroxybenzoyl group from FadD22 (pHBA-S-FAdD22) to form p-hydroxyphenylalkanoate (pHPA) intermediates during phenolphthiocerol (PPOL) biosynthesis. PPOL is an important intermediate in the biosynthesis of phenolic glycolipid (mycosid B). In Mycobacterium bovis (strain ATCC BAA-935 / AF2122/97), this protein is Phenolphthiocerol synthesis polyketide synthase type I Pks15/1 (pks15/1).